A 279-amino-acid polypeptide reads, in one-letter code: Protease HtpX homolog (279 aa).

The next 2 helical transmembrane spans lie at 4–24 (IFLFLATNIAVLVVINIVLAV) and 34–54 (GSLLAYSAVVGFTGSIISLLM). A Zn(2+)-binding site is contributed by His140. The active site involves Glu141. Residue His144 coordinates Zn(2+). Helical transmembrane passes span 155–175 (LIQGVVNTFVVFLSRIIANLI) and 189–209 (FLVSMVFQILFGFLASLIVMW). Glu215 serves as a coordination point for Zn(2+).

It belongs to the peptidase M48B family. Requires Zn(2+) as cofactor.

It localises to the cell inner membrane. This is Protease HtpX homolog from Neisseria meningitidis serogroup B (strain ATCC BAA-335 / MC58).